A 293-amino-acid chain; its full sequence is N-acetylneuraminate lyase (293 aa).

Aceneuramate-binding residues include serine 48 and serine 49. The active-site Proton donor is the tyrosine 137. The active-site Schiff-base intermediate with substrate is lysine 165. 5 residues coordinate aceneuramate: threonine 167, glycine 189, aspartate 191, glutamate 192, and serine 208.

Belongs to the DapA family. NanA subfamily. In terms of assembly, homotetramer.

Its subcellular location is the cytoplasm. It catalyses the reaction aceneuramate = aldehydo-N-acetyl-D-mannosamine + pyruvate. It participates in amino-sugar metabolism; N-acetylneuraminate degradation; D-fructose 6-phosphate from N-acetylneuraminate: step 1/5. Catalyzes the reversible aldol cleavage of N-acetylneuraminic acid (sialic acid; Neu5Ac) to form pyruvate and N-acetylmannosamine (ManNAc) via a Schiff base intermediate. This chain is N-acetylneuraminate lyase, found in Staphylococcus aureus (strain MRSA252).